A 388-amino-acid polypeptide reads, in one-letter code: Phosphopentomutase (388 aa).

Asp9, Asp283, His288, Asp324, His325, and His336 together coordinate Mn(2+).

It belongs to the phosphopentomutase family. The cofactor is Mn(2+).

It localises to the cytoplasm. The catalysed reaction is 2-deoxy-alpha-D-ribose 1-phosphate = 2-deoxy-D-ribose 5-phosphate. It catalyses the reaction alpha-D-ribose 1-phosphate = D-ribose 5-phosphate. It participates in carbohydrate degradation; 2-deoxy-D-ribose 1-phosphate degradation; D-glyceraldehyde 3-phosphate and acetaldehyde from 2-deoxy-alpha-D-ribose 1-phosphate: step 1/2. Isomerase that catalyzes the conversion of deoxy-ribose 1-phosphate (dRib-1-P) and ribose 1-phosphate (Rib-1-P) to deoxy-ribose 5-phosphate (dRib-5-P) and ribose 5-phosphate (Rib-5-P), respectively. The protein is Phosphopentomutase of Deinococcus radiodurans (strain ATCC 13939 / DSM 20539 / JCM 16871 / CCUG 27074 / LMG 4051 / NBRC 15346 / NCIMB 9279 / VKM B-1422 / R1).